A 177-amino-acid polypeptide reads, in one-letter code: Coatomer subunit zeta-1 (177 aa).

Belongs to the adaptor complexes small subunit family. Oligomeric complex that consists of at least the alpha, beta, beta', gamma, delta, epsilon and zeta subunits.

The protein localises to the cytoplasm. It localises to the golgi apparatus membrane. It is found in the cytoplasmic vesicle. The protein resides in the COPI-coated vesicle membrane. Its function is as follows. The coatomer is a cytosolic protein complex that binds to dilysine motifs and reversibly associates with Golgi non-clathrin-coated vesicles, which further mediate biosynthetic protein transport from the ER, via the Golgi up to the trans Golgi network. Coatomer complex is required for budding from Golgi membranes, and is essential for the retrograde Golgi-to-ER transport of dilysine-tagged proteins. The zeta subunit may be involved in regulating the coat assembly and, hence, the rate of biosynthetic protein transport due to its association-dissociation properties with the coatomer complex. The polypeptide is Coatomer subunit zeta-1 (COPZ1) (Oryza sativa subsp. japonica (Rice)).